Reading from the N-terminus, the 470-residue chain is 1-deoxy-D-xylulose 5-phosphate reductoisomerase, chloroplastic (470 aa).

NADPH-binding residues include threonine 83, glycine 84, serine 85, isoleucine 86, glycine 109, asparagine 111, and asparagine 197. A 1-deoxy-D-xylulose 5-phosphate-binding site is contributed by lysine 198. Glutamate 199 provides a ligand contact to NADPH. Residue aspartate 223 coordinates Mn(2+). Positions 224, 225, 249, and 272 each coordinate 1-deoxy-D-xylulose 5-phosphate. Mn(2+) is bound at residue glutamate 225. NADPH is bound at residue glycine 278. Positions 285, 290, 291, and 294 each coordinate 1-deoxy-D-xylulose 5-phosphate. Glutamate 294 serves as a coordination point for Mn(2+).

The protein belongs to the DXR family. Mn(2+) is required as a cofactor. The cofactor is Mg(2+).

It localises to the plastid. The protein localises to the chloroplast. It carries out the reaction 2-C-methyl-D-erythritol 4-phosphate + NADP(+) = 1-deoxy-D-xylulose 5-phosphate + NADPH + H(+). It participates in isoprenoid biosynthesis; isopentenyl diphosphate biosynthesis via DXP pathway; isopentenyl diphosphate from 1-deoxy-D-xylulose 5-phosphate: step 1/6. Functionally, catalyzes the NADPH-dependent rearrangement and reduction of 1-deoxy-D-xylulose-5-phosphate (DXP) to 2-C-methyl-D-erythritol 4-phosphate (MEP). The chain is 1-deoxy-D-xylulose 5-phosphate reductoisomerase, chloroplastic (DXR) from Mentha piperita (Peppermint).